The chain runs to 90 residues: Large ribosomal subunit protein bL31 (90 aa).

Residues 65–90 form a disordered region; that stretch reads YSKQEGSGSKSNKSKSTKSKKGKGKK. Over residues 76–90 the composition is skewed to basic residues; it reads NKSKSTKSKKGKGKK.

The protein belongs to the bacterial ribosomal protein bL31 family. Type A subfamily. Part of the 50S ribosomal subunit.

Functionally, binds the 23S rRNA. This chain is Large ribosomal subunit protein bL31, found in Trichodesmium erythraeum (strain IMS101).